The following is a 355-amino-acid chain: NAD-dependent protein deacylase sirtuin-6 (355 aa).

Ser-2 bears the N-acetylserine mark. Ser-10 carries the post-translational modification Phosphoserine. Residues 27–272 form the Deacetylase sirtuin-type domain; sequence PEELERKVWE…TQLMKHLGLE (246 aa). Position 33 is an N6-acetyllysine (Lys-33). NAD(+) contacts are provided by Ala-53, Thr-57, Phe-64, Arg-65, Trp-71, Gln-113, and His-133. The active-site Proton acceptor is the His-133. Cys-141, Cys-144, and Cys-166 together coordinate Zn(2+). Residue Lys-170 forms a Glycyl lysine isopeptide (Lys-Gly) (interchain with G-Cter in ubiquitin) linkage. Residue Cys-177 participates in Zn(2+) binding. The NAD(+) site is built by Gly-214, Ser-216, Asn-240, Gln-242, and Val-258. Residues 284 to 355 form a disordered region; that stretch reads KALPPLPRPP…KRVKAEVTPS (72 aa). Positions 287–296 are enriched in pro residues; sequence PPLPRPPTPK. Position 294 is a phosphothreonine (Thr-294). Ser-303 and Ser-330 each carry phosphoserine.

It belongs to the sirtuin family. Class IV subfamily. In terms of assembly, homodimer; binds to nucleosomes and DNA ends as a homodimer. Interacts with RELA; interferes with RELA binding to target DNA. Interacts with SMARCA5; promoting recruitment of SMARCA5/SNF2H to double-strand breaks (DSBs) sites. Interacts with the mTORC2 complex; preventing the ability of SIRT6 to deacetylate FOXO1. Interacts with the CLOCK-BMAL1 complex; recruited by the CLOCK-BMAL1 complex to regulate expression of clock-controlled genes. Interacts with CSNK2A2; preventing CSNK2A2 localization to the nucleus. Post-translationally, acetylated at Lys-33. Deacetylation at Lys-33 by SIRT1 promotes homomultimerization and binding to double-strand breaks (DSBs) sites. Phosphorylation at Ser-10 by MAPK8/JNK1 in response to oxidative stress stimulates the mono-ADP-ribosyltransferase activity on PARP1, leading to PARP1 recruitment to double-strand breaks (DSBs). In terms of processing, monoubiquitinated at Lys-170 by STUB1/CHIP, preventing its degradation by the proteasome. Post-translationally, sumoylated, leading to specifically decrease ability to deacetylate histone H3 at 'Lys-56' (H3K56ac).

It is found in the nucleus. The protein localises to the chromosome. It localises to the telomere. The protein resides in the endoplasmic reticulum. The catalysed reaction is N(6)-acetyl-L-lysyl-[protein] + NAD(+) + H2O = 2''-O-acetyl-ADP-D-ribose + nicotinamide + L-lysyl-[protein]. It catalyses the reaction N(6)-tetradecanoyl-L-lysyl-[protein] + NAD(+) + H2O = 2''-O-tetradecanoyl-ADP-D-ribose + nicotinamide + L-lysyl-[protein]. The enzyme catalyses N(6)-hexadecanoyl-L-lysyl-[protein] + NAD(+) + H2O = 2''-O-hexadecanoyl-ADP-D-ribose + nicotinamide + L-lysyl-[protein]. It carries out the reaction L-lysyl-[protein] + NAD(+) = N(6)-(ADP-D-ribosyl)-L-lysyl-[protein] + nicotinamide + H(+). The catalysed reaction is L-arginyl-[protein] + NAD(+) = N(omega)-(ADP-D-ribosyl)-L-arginyl-[protein] + nicotinamide + H(+). With respect to regulation, compared to the defatty-acylase activity, the protein deacetylase activity is weak in vitro, and requires activation. The histone deacetylase activity is strongly activated upon binding to nucleosomes and chromatin in vivo. Two molecules of SIRT6 associate with the acidic patch of one nucleosome, while the C-terminal disordered region of SIRT6 associates with nucleosomal DNA, leading to efficient histone deacetylation. The protein-lysine deacetylase activity is also activated by long-chain free fatty-acids. NAD-dependent protein deacetylase, deacylase and mono-ADP-ribosyltransferase that plays an essential role in DNA damage repair, telomere maintenance, metabolic homeostasis, inflammation, tumorigenesis and aging. Displays protein-lysine deacetylase or defatty-acylase (demyristoylase and depalmitoylase) activity, depending on the context. Acts as a key histone deacetylase by catalyzing deacetylation of histone H3 at 'Lys-9', 'Lys-18' and 'Lys-56' (H3K9ac, H3K18ac and H3K56ac, respectively), suppressing target gene expression of several transcription factors, including NF-kappa-B. Acts as an inhibitor of transcription elongation by mediating deacetylation of H3K9ac and H3K56ac, preventing release of NELFE from chromatin and causing transcriptional pausing. Involved in DNA repair by promoting double-strand break (DSB) repair: acts as a DSB sensor by recognizing and binding DSB sites, leading to (1) recruitment of DNA repair proteins, such as SMARCA5/SNF2H, and (2) deacetylation of histone H3K9ac and H3K56ac. SIRT6 participation to DSB repair is probably involved in extension of life span. Also promotes DNA repair by deacetylating non-histone proteins, such as DDB2 and p53/TP53. Specifically deacetylates H3K18ac at pericentric heterochromatin, thereby maintaining pericentric heterochromatin silencing at centromeres and protecting against genomic instability and cellular senescence. Involved in telomere maintenance by catalyzing deacetylation of histone H3 in telomeric chromatin, regulating telomere position effect and telomere movement in response to DNA damage. Required for embryonic stem cell differentiation by mediating histone deacetylation of H3K9ac. Plays a major role in metabolism by regulating processes such as glycolysis, gluconeogenesis, insulin secretion and lipid metabolism. Inhibits glycolysis via histone deacetylase activity and by acting as a corepressor of the transcription factor HIF1A, thereby controlling the expression of multiple glycolytic genes. Has tumor suppressor activity by repressing glycolysis, thereby inhibiting the Warburg effect. Also regulates glycolysis and tumorigenesis by mediating deacetylation and nuclear export of non-histone proteins, such as isoform M2 of PKM (PKM2). Acts as a negative regulator of gluconeogenesis by mediating deacetylation of non-histone proteins, such as FOXO1 and KAT2A/GCN5. Promotes beta-oxidation of fatty acids during fasting by catalyzing deacetylation of NCOA2, inducing coactivation of PPARA. Acts as a regulator of lipid catabolism in brown adipocytes, both by catalyzing deacetylation of histones and non-histone proteins, such as FOXO1. Also acts as a regulator of circadian rhythms, both by regulating expression of clock-controlled genes involved in lipid and carbohydrate metabolism, and by catalyzing deacetylation of PER2. The defatty-acylase activity is specifically involved in regulation of protein secretion. Has high activity toward long-chain fatty acyl groups and mediates protein-lysine demyristoylation and depalmitoylation of target proteins, such as RRAS2 and TNF, thereby regulating their secretion. Also acts as a mono-ADP-ribosyltransferase by mediating mono-ADP-ribosylation of PARP1, TRIM28/KAP1 or SMARCC2/BAF170. Mono-ADP-ribosyltransferase activity is involved in DNA repair, cellular senescence, repression of LINE-1 retrotransposon elements and regulation of transcription. The chain is NAD-dependent protein deacylase sirtuin-6 from Castor canadensis (American beaver).